The following is a 552-amino-acid chain: Hydroxylamine reductase (552 aa).

[2Fe-2S] cluster-binding residues include C3, C6, C18, and C25. H250, E274, C318, C406, C434, C459, E493, and K495 together coordinate hybrid [4Fe-2O-2S] cluster. The residue at position 406 (C406) is a Cysteine persulfide.

This sequence belongs to the HCP family. The cofactor is [2Fe-2S] cluster. It depends on hybrid [4Fe-2O-2S] cluster as a cofactor.

The protein resides in the cytoplasm. The enzyme catalyses A + NH4(+) + H2O = hydroxylamine + AH2 + H(+). Catalyzes the reduction of hydroxylamine to form NH(3) and H(2)O. This Shewanella sediminis (strain HAW-EB3) protein is Hydroxylamine reductase.